The primary structure comprises 424 residues: Homoserine O-succinyltransferase (424 aa).

The region spanning 67 to 381 (NAVLVCHALN…PHGHDAFLLD (315 aa)) is the AB hydrolase-1 domain. S173 serves as the catalytic Nucleophile. Substrate is bound at residue R243. Catalysis depends on residues D342 and H375. Position 376 (D376) interacts with substrate.

This sequence belongs to the AB hydrolase superfamily. MetX family. In terms of assembly, homodimer.

It localises to the cytoplasm. It carries out the reaction L-homoserine + succinyl-CoA = O-succinyl-L-homoserine + CoA. The protein operates within amino-acid biosynthesis; L-methionine biosynthesis via de novo pathway; O-succinyl-L-homoserine from L-homoserine: step 1/1. In terms of biological role, transfers a succinyl group from succinyl-CoA to L-homoserine, forming succinyl-L-homoserine. In vitro, also has serine succinyl transferase activity. The chain is Homoserine O-succinyltransferase from Bordetella petrii (strain ATCC BAA-461 / DSM 12804 / CCUG 43448).